We begin with the raw amino-acid sequence, 216 residues long: Uracil phosphoribosyltransferase (216 aa).

Residues arginine 85, arginine 110, and 135 to 143 (DPMVATGYS) contribute to the 5-phospho-alpha-D-ribose 1-diphosphate site. Residues isoleucine 200 and 205-207 (GDA) contribute to the uracil site. Position 206 (aspartate 206) interacts with 5-phospho-alpha-D-ribose 1-diphosphate.

Belongs to the UPRTase family. Requires Mg(2+) as cofactor.

The catalysed reaction is UMP + diphosphate = 5-phospho-alpha-D-ribose 1-diphosphate + uracil. It participates in pyrimidine metabolism; UMP biosynthesis via salvage pathway; UMP from uracil: step 1/1. With respect to regulation, allosterically activated by GTP. Functionally, catalyzes the conversion of uracil and 5-phospho-alpha-D-ribose 1-diphosphate (PRPP) to UMP and diphosphate. The polypeptide is Uracil phosphoribosyltransferase (Burkholderia pseudomallei (strain 668)).